The sequence spans 222 residues: UPF0488 protein C8orf33 homolog (222 aa).

The span at 1–16 (MAEPGRPAREAPAASS) shows a compositional bias: low complexity. 3 disordered regions span residues 1-103 (MAEP…AEQL), 119-146 (KTQRPTPKQKEQAVGAIRTLRSEKTPLP), and 186-210 (VSEATRKKSGRVCRPRPAERAKTTP). An N-acetylalanine modification is found at alanine 2. The segment covering 17–28 (RKTHRAPRRPRP) has biased composition (basic residues). Arginine 27 carries the post-translational modification Omega-N-methylarginine. The span at 29-39 (SRSASGASEPP) shows a compositional bias: low complexity. Serine 75 bears the Phosphoserine mark. The span at 93–103 (PPSAEAQAEQL) shows a compositional bias: low complexity.

Belongs to the UPF0488 family.

The sequence is that of UPF0488 protein C8orf33 homolog from Mus musculus (Mouse).